The chain runs to 502 residues: ATP synthase subunit beta, chloroplastic (502 aa).

Serine 17 carries the phosphoserine modification. An ATP-binding site is contributed by 176–183; that stretch reads GGAGVGKT.

Belongs to the ATPase alpha/beta chains family. F-type ATPases have 2 components, CF(1) - the catalytic core - and CF(0) - the membrane proton channel. CF(1) has five subunits: alpha(3), beta(3), gamma(1), delta(1), epsilon(1). CF(0) has four main subunits: a(1), b(1), b'(1) and c(9-12).

The protein localises to the plastid. Its subcellular location is the chloroplast thylakoid membrane. The enzyme catalyses ATP + H2O + 4 H(+)(in) = ADP + phosphate + 5 H(+)(out). Its function is as follows. Produces ATP from ADP in the presence of a proton gradient across the membrane. The catalytic sites are hosted primarily by the beta subunits. The polypeptide is ATP synthase subunit beta, chloroplastic (Lepidium virginicum (Virginia pepperweed)).